Reading from the N-terminus, the 234-residue chain is ATP-dependent dethiobiotin synthetase BioD (234 aa).

Glycine 14–isoleucine 19 is an ATP binding site. Threonine 18 serves as a coordination point for Mg(2+). The active site involves lysine 39. Residue serine 43 participates in substrate binding. ATP-binding positions include aspartate 56, glutamate 118–glycine 121, asparagine 178–histidine 179, and proline 208–leucine 210. Mg(2+) is bound by residues aspartate 56 and glutamate 118.

Belongs to the dethiobiotin synthetase family. Homodimer. Requires Mg(2+) as cofactor.

Its subcellular location is the cytoplasm. The enzyme catalyses (7R,8S)-7,8-diammoniononanoate + CO2 + ATP = (4R,5S)-dethiobiotin + ADP + phosphate + 3 H(+). The protein operates within cofactor biosynthesis; biotin biosynthesis; biotin from 7,8-diaminononanoate: step 1/2. In terms of biological role, catalyzes a mechanistically unusual reaction, the ATP-dependent insertion of CO2 between the N7 and N8 nitrogen atoms of 7,8-diaminopelargonic acid (DAPA, also called 7,8-diammoniononanoate) to form a ureido ring. The protein is ATP-dependent dethiobiotin synthetase BioD of Marinobacter nauticus (strain ATCC 700491 / DSM 11845 / VT8) (Marinobacter aquaeolei).